The primary structure comprises 1548 residues: Multidrug resistance protein (1548 aa).

Over 1-238 (MVDNGHVTIA…YHVWAQILPK (238 aa)) the chain is Cytoplasmic. In terms of domain architecture, ABC transmembrane type-1 1 spans 231 to 514 (VWAQILPKLL…IPIIISSILQ (284 aa)). Residues 239–256 (LLSDVTALMLPVLLEYFV) form a helical membrane-spanning segment. Residue asparagine 263 is glycosylated (N-linked (GlcNAc...) asparagine). 5 consecutive transmembrane segments (helical) span residues 266–287 (WGWGLGLALTIFLTNVIQSCSA), 349–367 (VMYFWSAPLQLVLCLLLLI), 375–392 (VPGMAVLFVTLPLQAVIS), 463–480 (ATPTLVIAVVFILYHVSG), and 500–519 (VSFFMIPIIISSILQCFVSA). Residues 520–932 (KRVTAFIECP…PWSTYVAYLK (413 aa)) are Cytoplasmic-facing. The 222-residue stretch at 634 to 855 (VEEGDREYYQ…ALEETLRGEL (222 aa)) folds into the ABC transporter 1 domain. 667 to 674 (GSTGSGKS) is an ATP binding site. 4 helical membrane-spanning segments follow: residues 933-950 (SCGGLEAWGCLLATFALT), 975-993 (TYLYVYLFIVFLEIFGSPL), 1051-1070 (GYLYLLEYFFSMCSTVIIMV), and 1072-1088 (VQPFVLVAIVPCVYSYY). An ABC transmembrane type-1 2 domain is found at 940–1221 (WGCLLATFAL…LVRQVAMVEA (282 aa)). 2 N-linked (GlcNAc...) asparagine glycosylation sites follow: asparagine 1095 and asparagine 1154. 2 consecutive transmembrane segments (helical) span residues 1164-1182 (LEFLSCVVTFMVAFIGVIG) and 1186-1205 (GASSQNIGLISLSLTMSMTL). Topologically, residues 1206–1548 (TETLNWLVRQ…RIVQPAVLSD (343 aa)) are cytoplasmic. Positions 1286–1521 (LVLEGVQMRY…HQSMFHSMVE (236 aa)) constitute an ABC transporter 2 domain. 1320–1327 (GRTGSGKS) is a binding site for ATP.

Belongs to the ABC transporter superfamily. ABCB family. Multidrug resistance exporter (TC 3.A.1.201) subfamily.

It localises to the membrane. The catalysed reaction is ATP + H2O + xenobioticSide 1 = ADP + phosphate + xenobioticSide 2.. The polypeptide is Multidrug resistance protein (PGPA) (Leishmania tarentolae (Sauroleishmania tarentolae)).